Here is an 880-residue protein sequence, read N- to C-terminus: MKKRLIAPMLLSAASLAFFAMSGSAQAAAYTDYSLYKVEPSNTFSTESQASQAVAKLEKDTGWDASYQASGTTTTYQISASGIHSESEAKAILSGLAKQTSITGTSSPVGSKQPYVTISSGAISGEKQANTILAKLKQETGVAGAVKAYGAAQPYMNVMTSDIADETKVKALIQSLAKQTGIKSSYQPITHTVSVTTIQSGTIVGDSRAAQIKNAFQKESGLQASLKETVKGQAYYTFTTAAISGEANAKTLLQQLKQSTGITGSYKSINQKTTVESYNVQSAYFKGLSTVKDAISQIKKNTGVSGSYQQVGKSTSYTVNMKGITKQQLQKIDTFFKKKKWHYTSSSVKKTTTSAAYQITTAKILGEQQANKAAAFFAQKKVKAAKTAAGSTAENQYQLISEETSDQAKVTKGLNILKKNQLSASAKSVKKQIADTFKITTESLLDQTKVNQALTFFKSNHISVASQKTGQTAASSYQITTEAIISQEEIDRVLTFFKQNHIAVTTSKTGQTAYTQYKIVTTQLSSKTALNNGLTYLKSKSVTPSYTTKSNTLYKISVNEQFTGNDTAAAASTKLKQLYGWTSSIVKIKNGPQIMKTNYNLSLRDMVQKQMTVSPQTDGAAYVSLTYINTATSTVTADVLNIRSTPEVSPTNVIGQFKKGDKVKVIGQINGWAKINLGWRNASSDEVVQYVDPNNFSRDSKYYFQFLKLSQTAGLSVTEVNQKVLAGKGILTGRAKAFIDAANQYSINELYLISHALLETGNGTSALANGLTYNGKTVYNMYGIGAYDSNPNYYGAKYAYEQGWFTPEAAIIGGAKFIGSSYIHNTAYNQDTLYKMRWSATATHQYATDIGWAYKQVNRMYSLYSLLDGYTLYFDVPEYR.

An N-terminal signal peptide occupies residues 1–27 (MKKRLIAPMLLSAASLAFFAMSGSAQA). 3 SPOR domains span residues 70–149 (SGTT…VKAY), 150–229 (GAAQ…LKET), and 230–311 (VKGQ…YQQV). Tandem repeats lie at residues 439 to 473 (ITTESLLDQTKVNQALTFFKSNHISVASQKTGQTA) and 479 to 513 (ITTEAIISQEEIDRVLTFFKQNHIAVTTSKTGQTA). The SH3b domain occupies 630-700 (TATSTVTADV…VDPNNFSRDS (71 aa)).

It belongs to the glycosyl hydrolase 73 family. In terms of assembly, homodimer.

The protein localises to the secreted. It is found in the cell wall. The catalysed reaction is an N(4)-(oligosaccharide-(1-&gt;3)-[oligosaccharide-(1-&gt;6)]-beta-D-Man-(1-&gt;4)-beta-D-GlcNAc-(1-&gt;4)-alpha-D-GlcNAc)-L-asparaginyl-[protein] + H2O = an oligosaccharide-(1-&gt;3)-[oligosaccharide-(1-&gt;6)]-beta-D-Man-(1-&gt;4)-D-GlcNAc + N(4)-(N-acetyl-beta-D-glucosaminyl)-L-asparaginyl-[protein]. With respect to regulation, inhibited by diethyl pyrocarbonate, slightly by EDTA. Not inhibited by PMSF, diisopropyl fluorophosphate, 2-mercaptoethanol or N-ethylmaleimide. Functionally, cell wall hydrolase not involved in cell autolysis, competence, sporulation or germination. It hydrolyzes the beta-1,4 glycan bond between the N-acetylglucosaminyl and the N-acetylmuramoyl residues in the glycan chain. The sequence is that of Beta-N-acetylglucosaminidase (lytD) from Bacillus subtilis (strain 168).